The primary structure comprises 412 residues: G-protein coupled receptor homolog UL33 (412 aa).

At 1–35 the chain is on the virion surface side; sequence MDTIIHNTTNRSTDTPHVNITCNITEPLSAIRTTE. N-linked (GlcNAc...) asparagine; by host glycosylation is found at asparagine 7, asparagine 19, and asparagine 23. The helical transmembrane segment at 36 to 56 threads the bilayer; that stretch reads AVINTFIIFVGGPLNAIVLIT. Residues 57-80 are Intravirion-facing; sequence QLLTNRVLGYSTPTIYMTNLYSTN. Residues 81–101 form a helical membrane-spanning segment; the sequence is FLTLTVLPFIVLSNQWLLPAS. Residues 102–106 lie on the Virion surface side of the membrane; sequence VASCK. The cysteines at positions 105 and 188 are disulfide-linked. A helical transmembrane segment spans residues 107–127; sequence FLSVIYYSSCTVGFATVALIA. Residues 128–147 lie on the Intravirion side of the membrane; that stretch reads ADRYRVLHKRTYARQSYRST. Residues 148–168 traverse the membrane as a helical segment; it reads YIILLLTWFAGLIFSMPAAVY. Residues 169-206 lie on the Virion surface side of the membrane; that stretch reads TTVVIHNGTNGQSSNGHATCVLYFIADEVYTVLLSWKV. Residues 207–227 traverse the membrane as a helical segment; sequence LLTLVWGAAPVIMMTWFYAFF. At 228–244 the chain is on the intravirion side; the sequence is YSTVQRASQKQRSRTLT. Residues 245-265 form a helical membrane-spanning segment; that stretch reads FVSVLLISFVALQTPYVSIMI. Over 266 to 292 the chain is Virion surface; that stretch reads FNSYATAAWPMDCEHLTLRRTIGTLSR. A helical membrane pass occupies residues 293–313; it reads LVPHLHCLINPILYALLGHDF. The Intravirion portion of the chain corresponds to 314 to 412; it reads LQRMRQCFRG…SQSHHNLSGV (99 aa). The disordered stretch occupies residues 377-412; sequence NFPSGTWKGGQKTASNDTSTKIPHRLSQSHHNLSGV. A compositionally biased stretch (polar residues) spans 388 to 397; sequence KTASNDTSTK.

Belongs to the G-protein coupled receptor 1 family. In terms of assembly, heterodimerizes with US28.

It localises to the virion. The protein resides in the host cell membrane. It is found in the host cytoplasm. In terms of biological role, G-protein-coupled receptor (vGPCR) that constitutively activates multiple oncogenic signaling pathways including STAT3, AP-1, phospholipase C, NF-kappa-B or cAMP-responsive element (CRE) pathways. Plays an important role in viral reactivation from latency through activation of host CREB1, facilitating its recruitment to the viral major immediate early (MIE) genes. In turn, expression of the MIE-driven genes such as UL123 are de-repressed. Also facilitates virus dissemination via the extracellular and cell-to-cell route. This is G-protein coupled receptor homolog UL33 (UL33) from Human cytomegalovirus (strain Merlin) (HHV-5).